We begin with the raw amino-acid sequence, 299 residues long: ATP phosphoribosyltransferase (299 aa).

The protein belongs to the ATP phosphoribosyltransferase family. Long subfamily. It depends on Mg(2+) as a cofactor.

It is found in the cytoplasm. The catalysed reaction is 1-(5-phospho-beta-D-ribosyl)-ATP + diphosphate = 5-phospho-alpha-D-ribose 1-diphosphate + ATP. It participates in amino-acid biosynthesis; L-histidine biosynthesis; L-histidine from 5-phospho-alpha-D-ribose 1-diphosphate: step 1/9. Feedback inhibited by histidine. Functionally, catalyzes the condensation of ATP and 5-phosphoribose 1-diphosphate to form N'-(5'-phosphoribosyl)-ATP (PR-ATP). Has a crucial role in the pathway because the rate of histidine biosynthesis seems to be controlled primarily by regulation of HisG enzymatic activity. The sequence is that of ATP phosphoribosyltransferase from Actinobacillus pleuropneumoniae serotype 5b (strain L20).